Reading from the N-terminus, the 512-residue chain is Lysine--tRNA ligase (512 aa).

Positions 408 and 415 each coordinate Mg(2+).

This sequence belongs to the class-II aminoacyl-tRNA synthetase family. Homodimer. Mg(2+) is required as a cofactor.

The protein resides in the cytoplasm. The catalysed reaction is tRNA(Lys) + L-lysine + ATP = L-lysyl-tRNA(Lys) + AMP + diphosphate. The protein is Lysine--tRNA ligase of Prochlorococcus marinus (strain MIT 9301).